The following is a 338-amino-acid chain: Transcription factor GRA2 (338 aa).

2 disordered regions span residues 171–230 (CQDS…PHYA) and 256–277 (TQHEQRLPGTNEDLAEGDDGGS). The span at 174 to 203 (SGVSQPSNLADDTLGQGQPVSTVVQPQHPG) shows a compositional bias: polar residues. The interval 223–236 (KRQRPHYAIEKRYR) is basic motif. The bHLH domain occupies 223–303 (KRQRPHYAIE…NQATLCIRQL (81 aa)). The interval 237–303 (AGLQERFEAL…NQATLCIRQL (67 aa)) is helix-loop-helix motif.

It localises to the nucleus. Functionally, transcription factor that specifically regulates the expression of the gene cluster that mediates the biosynthesis of gramillins A and B, bicyclic lipopeptides that induce cell death in maize leaves but not in wheat leaves. The protein is Transcription factor GRA2 (GRA2) of Gibberella zeae (strain ATCC MYA-4620 / CBS 123657 / FGSC 9075 / NRRL 31084 / PH-1) (Wheat head blight fungus).